Here is a 143-residue protein sequence, read N- to C-terminus: Small ribosomal subunit protein bS6 (143 aa).

The disordered stretch occupies residues 98–143 (TEQSLIMKSKDEKGDKPERSERRRRDDEEGEAPAANDNDGDNAEAA). Residues 105-124 (KSKDEKGDKPERSERRRRDD) are compositionally biased toward basic and acidic residues.

Belongs to the bacterial ribosomal protein bS6 family.

In terms of biological role, binds together with bS18 to 16S ribosomal RNA. In Xanthomonas euvesicatoria pv. vesicatoria (strain 85-10) (Xanthomonas campestris pv. vesicatoria), this protein is Small ribosomal subunit protein bS6.